Consider the following 265-residue polypeptide: MRLYRDRAVVLRQHKLGEADRIVTLLTRDHGLVRAVAKGVRRTRSKFGSRLEPFAHIDAQLHPGRNLDIVTQVVSIDAFAADIVNDYGRYTCGCAMLETAERLAGEERAPAPALHRLTVGALRAVADGSRPRDLLLDAYLLRAMGIAGWVPALTECARCATPGPHRAFHIAAGGSVCPHCRPAGSTTPPLGVLDLMSALHDGDWEAAQGAPQSHRSYVSGLVAAHLQWHLERQLKTLPLVERFYQADRSVAERRAALIGQDSECG.

This sequence belongs to the RecO family.

Involved in DNA repair and RecF pathway recombination. This is DNA repair protein RecO from Mycobacterium ulcerans (strain Agy99).